We begin with the raw amino-acid sequence, 256 residues long: Hydroxyacylglutathione hydrolase (256 aa).

Positions 55, 57, 59, 60, 113, 130, and 168 each coordinate Zn(2+).

This sequence belongs to the metallo-beta-lactamase superfamily. Glyoxalase II family. In terms of assembly, monomer. Zn(2+) is required as a cofactor.

The enzyme catalyses an S-(2-hydroxyacyl)glutathione + H2O = a 2-hydroxy carboxylate + glutathione + H(+). It functions in the pathway secondary metabolite metabolism; methylglyoxal degradation; (R)-lactate from methylglyoxal: step 2/2. Thiolesterase that catalyzes the hydrolysis of S-D-lactoyl-glutathione to form glutathione and D-lactic acid. This chain is Hydroxyacylglutathione hydrolase, found in Psychromonas ingrahamii (strain DSM 17664 / CCUG 51855 / 37).